A 237-amino-acid chain; its full sequence is UPF0688 protein C1orf174 homolog (237 aa).

A disordered region spans residues 1-187 (MRSRKLAGGV…LLDDDSNQPM (187 aa)). A compositionally biased stretch (low complexity) spans 11-28 (RSSARLRARSCSAASASA). The segment covering 29–47 (QDTHVTTSAQTACQTPSSH) has biased composition (polar residues). Residues 48–76 (KATDRRTSKKFKYDKGHIVKSELQKHRSD) show a composition bias toward basic and acidic residues. S183 is subject to Phosphoserine.

Belongs to the UPF0688 family.

It is found in the nucleus. The chain is UPF0688 protein C1orf174 homolog from Bos taurus (Bovine).